Reading from the N-terminus, the 296-residue chain is Protoheme IX farnesyltransferase (296 aa).

8 helical membrane passes run 8–28 (VTKP…FFLA), 35–55 (WILM…GCAI), 84–104 (AAFF…SYFT), 107–127 (VAVA…TMYF), 132–152 (VYGT…GYCA), 162–182 (AILL…IAIF), 215–235 (FAVV…FMVV), and 264–284 (VFFF…LDFN).

It belongs to the UbiA prenyltransferase family. Protoheme IX farnesyltransferase subfamily.

The protein localises to the cell inner membrane. The catalysed reaction is heme b + (2E,6E)-farnesyl diphosphate + H2O = Fe(II)-heme o + diphosphate. It participates in porphyrin-containing compound metabolism; heme O biosynthesis; heme O from protoheme: step 1/1. In terms of biological role, converts heme B (protoheme IX) to heme O by substitution of the vinyl group on carbon 2 of heme B porphyrin ring with a hydroxyethyl farnesyl side group. The sequence is that of Protoheme IX farnesyltransferase from Marinomonas sp. (strain MWYL1).